The sequence spans 758 residues: Polyribonucleotide nucleotidyltransferase (758 aa).

Mg(2+)-binding residues include D488 and D494. The KH domain maps to 555 to 614 (PKLYTMKINPEKIRDVIGKGGAVIRALTEETGTQINIDEDGTITIASTDSAKADEAKRRI). Residues 624 to 692 (GKIYEGPVVK…EKGRVKLSMR (69 aa)) form the S1 motif domain. Residues 692-758 (RALLDRPMGD…AGEHSGQMDA (67 aa)) are disordered. The segment covering 707-735 (PAERGERGDRGDRGDRPERGERRERREPA) has biased composition (basic and acidic residues). Positions 736-745 (GADQQQQQQQ) are enriched in low complexity.

The protein belongs to the polyribonucleotide nucleotidyltransferase family. Requires Mg(2+) as cofactor.

The protein localises to the cytoplasm. It carries out the reaction RNA(n+1) + phosphate = RNA(n) + a ribonucleoside 5'-diphosphate. Functionally, involved in mRNA degradation. Catalyzes the phosphorolysis of single-stranded polyribonucleotides processively in the 3'- to 5'-direction. This chain is Polyribonucleotide nucleotidyltransferase, found in Paracidovorax citrulli (strain AAC00-1) (Acidovorax citrulli).